The sequence spans 369 residues: Cell division protein FtsZ (369 aa).

GTP contacts are provided by residues 27 to 31, 119 to 121, Glu-150, and Asn-189; these read GAGNN and GTG.

It belongs to the FtsZ family. Homodimer. Polymerizes to form a dynamic ring structure in a strictly GTP-dependent manner. Interacts directly with several other division proteins.

The protein resides in the cytoplasm. In terms of biological role, essential cell division protein that forms a contractile ring structure (Z ring) at the future cell division site. The regulation of the ring assembly controls the timing and the location of cell division. One of the functions of the FtsZ ring is to recruit other cell division proteins to the septum to produce a new cell wall between the dividing cells. Binds GTP and shows GTPase activity. The chain is Cell division protein FtsZ from Mycoplasma genitalium (strain ATCC 33530 / DSM 19775 / NCTC 10195 / G37) (Mycoplasmoides genitalium).